Consider the following 83-residue polypeptide: Hainantoxin-III 12 (83 aa).

The signal sequence occupies residues 1–21 (MKASMFLALAGLVLLFVVGYA). Positions 22–48 (SGSEEKEFPRELLSKIFAVDDFKGEER) are excised as a propeptide. 3 disulfides stabilise this stretch: Cys50/Cys65, Cys57/Cys70, and Cys64/Cys77. Leu81 is subject to Leucine amide.

Belongs to the neurotoxin 10 (Hwtx-1) family. 15 (Hntx-3) subfamily. In terms of assembly, monomer. In terms of tissue distribution, expressed by the venom gland.

The protein localises to the secreted. Its function is as follows. Selective antagonist of neuronal tetrodotoxin (TTX)-sensitive voltage-gated sodium channels (IC(50)=1270 nM on Nav1.1/SCN1A, 270 nM on Nav1.2/SCN2A, 491 nM on Nav1.3/SCN3A and 232 nM on Nav1.7/SCN9A). This toxin suppress Nav1.7 current amplitude without significantly altering the activation, inactivation, and repriming kinetics. Short extreme depolarizations partially activate the toxin-bound channel, indicating voltage-dependent inhibition of this toxin. This toxin increases the deactivation of the Nav1.7 current after extreme depolarizations. The toxin-Nav1.7 complex is gradually dissociated upon prolonged strong depolarizations in a voltage-dependent manner, and the unbound toxin rebinds to Nav1.7 after a long repolarization. Moreover, analysis of chimeric channels showed that the DIIS3-S4 linker is critical for toxin binding to Nav1.7. These data are consistent with this toxin interacting with Nav1.7 site 4 and trapping the domain II voltage sensor in the closed state. The sequence is that of Hainantoxin-III 12 from Cyriopagopus hainanus (Chinese bird spider).